The primary structure comprises 474 residues: Trehalose-6-phosphate synthase (474 aa).

Arg10 is a D-glucose 6-phosphate binding site. 22–23 (GG) lines the UDP-alpha-D-glucose pocket. Positions 77 and 131 each coordinate D-glucose 6-phosphate. Residues Arg263 and Lys268 each coordinate UDP-alpha-D-glucose. Arg301 is a D-glucose 6-phosphate binding site. UDP-alpha-D-glucose is bound by residues Phe340 and 366–370 (LVAKE).

This sequence belongs to the glycosyltransferase 20 family. Homotetramer.

The catalysed reaction is D-glucose 6-phosphate + UDP-alpha-D-glucose = alpha,alpha-trehalose 6-phosphate + UDP + H(+). It functions in the pathway glycan biosynthesis; trehalose biosynthesis. Functionally, probably involved in the osmoprotection via the biosynthesis of trehalose. Catalyzes the transfer of glucose from UDP-alpha-D-glucose (UDP-Glc) to D-glucose 6-phosphate (Glc-6-P) to form trehalose-6-phosphate. Acts with retention of the anomeric configuration of the UDP-sugar donor. In Shigella dysenteriae serotype 1 (strain Sd197), this protein is Trehalose-6-phosphate synthase.